We begin with the raw amino-acid sequence, 31 residues long: GVIPCGESCVFIPCISSVVGCTCKNKVCYRN.

A cross-link (cyclopeptide (Gly-Asn)) is located at residues 1–31; sequence GVIPCGESCVFIPCISSVVGCTCKNKVCYRN. Cystine bridges form between C5/C21, C9/C23, and C14/C28.

Post-translationally, this is a cyclic peptide. Contains 3 disulfide bonds.

In terms of biological role, probably participates in a plant defense mechanism (Potential). Binds to and induces leakage in phospholipd membranes, particularly ones containing 1-palmitoyl-2-oleophosphatidylethanolamine (POPE). The protein is Cyclotide mech-6 of Melicytus chathamicus (Chatham Island mahoe).